The sequence spans 365 residues: tRNA-specific 2-thiouridylase MnmA (365 aa).

ATP contacts are provided by residues 6–13 (AMSGGVDS) and Met-32. Cys-101 functions as the Nucleophile in the catalytic mechanism. Cys-101 and Cys-199 are joined by a disulfide. Gly-125 is an ATP binding site. The interaction with tRNA stretch occupies residues 148-150 (KDQ). Cys-199 serves as the catalytic Cysteine persulfide intermediate.

It belongs to the MnmA/TRMU family.

It localises to the cytoplasm. The catalysed reaction is S-sulfanyl-L-cysteinyl-[protein] + uridine(34) in tRNA + AH2 + ATP = 2-thiouridine(34) in tRNA + L-cysteinyl-[protein] + A + AMP + diphosphate + H(+). Its function is as follows. Catalyzes the 2-thiolation of uridine at the wobble position (U34) of tRNA, leading to the formation of s(2)U34. This is tRNA-specific 2-thiouridylase MnmA from Kineococcus radiotolerans (strain ATCC BAA-149 / DSM 14245 / SRS30216).